A 479-amino-acid chain; its full sequence is Bifunctional NAD(P)H-hydrate repair enzyme Nnr (479 aa).

The tract at residues 1-214 (MTVIIQGRSF…GIGIPLLAEI (214 aa)) is NAD(P)H-hydrate epimerase. One can recognise a YjeF N-terminal domain in the interval 31–214 (MRRIDQNAQA…GIGIPLLAEI (184 aa)). The tract at residues 76–80 (NNGGD) is NADPHX 1; for epimerase activity. Residues N77 and D146 each coordinate K(+). An NADPHX 1; for epimerase activity region spans residues 150–156 (GTGGTGS). D179 lines the (6S)-NADPHX pocket. Position 182 (S182) interacts with K(+). In terms of domain architecture, YjeF C-terminal spans 216 to 474 (TGPGDLLILR…TAVPQVLFRS (259 aa)). An ADP-dependent (S)-NAD(P)H-hydrate dehydratase region spans residues 216-479 (TGPGDLLILR…VLFRSTSERE (264 aa)). (6S)-NADPHX is bound at residue G312. The tract at residues 353 to 359 (HAGEFAR) is NADPHX 2; for dehydratase activity. ADP-binding positions include 388 to 392 (KGAVD) and 407 to 416 (TPAMTTGGTG). (6S)-NADPHX is bound at residue D417.

It in the N-terminal section; belongs to the NnrE/AIBP family. The protein in the C-terminal section; belongs to the NnrD/CARKD family. Requires K(+) as cofactor.

The enzyme catalyses (6S)-NADHX + ADP = AMP + phosphate + NADH + H(+). It catalyses the reaction (6S)-NADPHX + ADP = AMP + phosphate + NADPH + H(+). It carries out the reaction (6R)-NADHX = (6S)-NADHX. The catalysed reaction is (6R)-NADPHX = (6S)-NADPHX. Bifunctional enzyme that catalyzes the epimerization of the S- and R-forms of NAD(P)HX and the dehydration of the S-form of NAD(P)HX at the expense of ADP, which is converted to AMP. This allows the repair of both epimers of NAD(P)HX, a damaged form of NAD(P)H that is a result of enzymatic or heat-dependent hydration. This chain is Bifunctional NAD(P)H-hydrate repair enzyme Nnr (nnr), found in Methanospirillum hungatei JF-1 (strain ATCC 27890 / DSM 864 / NBRC 100397 / JF-1).